Here is a 205-residue protein sequence, read N- to C-terminus: Cytochrome bo(3) ubiquinol oxidase subunit 3 (205 aa).

The Cytoplasmic segment spans residues M1–K26. A helical transmembrane segment spans residues L27–V47. The Extracellular segment spans residues Y48–S69. Residues I70–A90 traverse the membrane as a helical segment. The Cytoplasmic portion of the chain corresponds to M91–K97. Residues M98–V118 traverse the membrane as a helical segment. At H119 to S138 the chain is on the extracellular side. A helical membrane pass occupies residues I139 to L159. Over S160–R177 the chain is Cytoplasmic. The helical transmembrane segment at I178 to F198 threads the bilayer. At V199–I205 the chain is on the extracellular side.

It belongs to the cytochrome c oxidase subunit 3 family. As to quaternary structure, heterooctamer of two A chains, two B chains, two C chains and two D chains.

The protein resides in the cell membrane. Functionally, cytochrome bo(3) ubiquinol terminal oxidase is the component of the aerobic respiratory chain of E.coli that predominates when cells are grown at high aeration. Has proton pump activity across the membrane in addition to electron transfer, pumping 2 protons/electron. The protein is Cytochrome bo(3) ubiquinol oxidase subunit 3 (cyoC) of Buchnera aphidicola subsp. Acyrthosiphon pisum (strain APS) (Acyrthosiphon pisum symbiotic bacterium).